Reading from the N-terminus, the 94-residue chain is Large ribosomal subunit protein uL23 (94 aa).

The protein belongs to the universal ribosomal protein uL23 family. As to quaternary structure, part of the 50S ribosomal subunit. Contacts protein L29, and trigger factor when it is bound to the ribosome.

In terms of biological role, one of the early assembly proteins it binds 23S rRNA. One of the proteins that surrounds the polypeptide exit tunnel on the outside of the ribosome. Forms the main docking site for trigger factor binding to the ribosome. In Geobacter metallireducens (strain ATCC 53774 / DSM 7210 / GS-15), this protein is Large ribosomal subunit protein uL23.